The primary structure comprises 392 residues: Formate-dependent phosphoribosylglycinamide formyltransferase (392 aa).

N(1)-(5-phospho-beta-D-ribosyl)glycinamide is bound by residues Glu-22–Leu-23 and Glu-82. Residues Arg-114, Lys-155, Ser-160 to Gln-165, Glu-195 to Val-198, and Glu-203 contribute to the ATP site. Positions Arg-119–Leu-308 constitute an ATP-grasp domain. Mg(2+) is bound by residues Glu-267 and Glu-279. N(1)-(5-phospho-beta-D-ribosyl)glycinamide-binding positions include Asp-286, Lys-355, and Arg-362–Arg-363.

Belongs to the PurK/PurT family. In terms of assembly, homodimer.

The enzyme catalyses N(1)-(5-phospho-beta-D-ribosyl)glycinamide + formate + ATP = N(2)-formyl-N(1)-(5-phospho-beta-D-ribosyl)glycinamide + ADP + phosphate + H(+). It participates in purine metabolism; IMP biosynthesis via de novo pathway; N(2)-formyl-N(1)-(5-phospho-D-ribosyl)glycinamide from N(1)-(5-phospho-D-ribosyl)glycinamide (formate route): step 1/1. In terms of biological role, involved in the de novo purine biosynthesis. Catalyzes the transfer of formate to 5-phospho-ribosyl-glycinamide (GAR), producing 5-phospho-ribosyl-N-formylglycinamide (FGAR). Formate is provided by PurU via hydrolysis of 10-formyl-tetrahydrofolate. This chain is Formate-dependent phosphoribosylglycinamide formyltransferase, found in Salmonella dublin (strain CT_02021853).